We begin with the raw amino-acid sequence, 290 residues long: PIH1 domain-containing protein 1 (290 aa).

3 positions are modified to phosphoserine: serine 12, serine 16, and serine 173.

This sequence belongs to the PIH1 family. Component of the R2TP complex composed at least of RUVBL1, RUVBL2, RPAP3 and PIHD1. Component of the PAQosome complex which is responsible for the biogenesis of several protein complexes and which consists of R2TP complex members RUVBL1, RUVBL2, RPAP3 and PIH1D1, URI complex members PFDN2, PFDN6, PDRG1, UXT and URI1 as well as ASDURF, POLR2E and DNAAF10/WDR92. Interacts with phosphorylated TELO2. Mediates interaction of TELO2 with the R2TP complex. Interacts with phosphorylated ECD, EFTUD2/SNRP116, RPB1 and UBR5 and with RPB1 in a phosphorylation-independent manner. Interacts with the core C/D box snoRNP particle components NOP58 and FBL and with RUVBL1/TIP49. Interacts with RPAP3 and DNAAF10. Interacts with histone H4 and with SWI/SNF complex member SMARCB1/SNF5. Interacts with the mTORC1 complex member RPTOR. Interacts with isoform 1 of MSL1.

It localises to the nucleus. Its function is as follows. Involved in the assembly of C/D box small nucleolar ribonucleoprotein (snoRNP) particles. Recruits the SWI/SNF complex to the core promoter of rRNA genes and enhances pre-rRNA transcription. Mediates interaction of TELO2 with the R2TP complex which is necessary for the stability of MTOR and SMG1. Positively regulates the assembly and activity of the mTORC1 complex. This chain is PIH1 domain-containing protein 1 (Pih1d1), found in Mus musculus (Mouse).